Consider the following 392-residue polypeptide: Keratin, type I cuticular Ha4 (392 aa).

Residues M1–E56 are head. Positions E56 to L367 constitute an IF rod domain. The segment at K57 to R91 is coil 1A. The tract at residues N92–A102 is linker 1. The interval Y103 to C203 is coil 1B. Residues Q204–V219 form a linker 12 region. The interval D220 to E363 is coil 2. Positions D364 to C392 are tail.

This sequence belongs to the intermediate filament family. In terms of tissue distribution, expressed in the hair root in the hair shaft cuticle and cortex.

In Mus musculus (Mouse), this protein is Keratin, type I cuticular Ha4.